The chain runs to 105 residues: Large ribosomal subunit protein bL21 (105 aa).

It belongs to the bacterial ribosomal protein bL21 family. Part of the 50S ribosomal subunit. Contacts protein L20.

This protein binds to 23S rRNA in the presence of protein L20. This Thermotoga maritima (strain ATCC 43589 / DSM 3109 / JCM 10099 / NBRC 100826 / MSB8) protein is Large ribosomal subunit protein bL21.